We begin with the raw amino-acid sequence, 1331 residues long: Retrotransposon-like protein 1 (1331 aa).

Disordered stretches follow at residues 1-123 (MMEP…SQED), 128-147 (TDLA…SSTV), 556-595 (EADE…ETFY), and 971-1033 (PSSE…DEPN). Residues 19–30 (SSKQMESSEGSS) show a composition bias toward low complexity. 3 stretches are compositionally biased toward acidic residues: residues 109–123 (EMEE…SQED), 128–143 (TDLA…EEPD), and 569–578 (GSDDLSESEP). Residues 992–1001 (RRVATTTRPT) are compositionally biased toward low complexity. Positions 1015–1024 (PESEDEEESE) are enriched in acidic residues. The next 2 membrane-spanning stretches (helical) occupy residues 1070–1090 (FYRS…LVML) and 1117–1137 (LFLD…TQLF). The interval 1309–1331 (SPPREGATLEELPSDADEDAGLD) is disordered. Acidic residues predominate over residues 1320 to 1331 (LPSDADEDAGLD).

The protein localises to the membrane. In terms of biological role, plays an essential role in capillaries endothelial cells for the maintenance of feto-maternal interface and for development of the placenta. The protein is Retrotransposon-like protein 1 (RTL1) of Bos taurus (Bovine).